Here is a 734-residue protein sequence, read N- to C-terminus: Photosystem I P700 chlorophyll a apoprotein A2 (734 aa).

Transmembrane regions (helical) follow at residues 46–69 (IFASHFGQLAIIFLWTSGNLFHVA), 135–158 (LYSGALFLLFLSAISLIAGWLHLQ), 175–199 (LNHHLSGLFGVSPLAWTGHLVHVAI), 273–291 (MAHHHLAIAFIFLVAGHMY), 330–353 (LHFQLGLALASLGVITSLVAQHMY), 369–395 (AALYTHHQYIAGFIMTGAFAHGAIFFI), 417–439 (AIISHLSWASLFLGFHTLGLYVH), and 517–535 (FLVHHAIALGLHTTTLILV). [4Fe-4S] cluster is bound by residues cysteine 559 and cysteine 568. 2 helical membrane-spanning segments follow: residues 575 to 596 (AFYLAVFWMLNTIGWVTFYWHW) and 643 to 665 (LSVWAWMFLFGHLVWATGFMFLI). Residues histidine 654, methionine 662, and tyrosine 670 each coordinate chlorophyll a. Tryptophan 671 lines the phylloquinone pocket. The helical transmembrane segment at 707-727 (LVGLAHFSVGYIFTYAAFLIA) threads the bilayer.

This sequence belongs to the PsaA/PsaB family. As to quaternary structure, the PsaA/B heterodimer binds the P700 chlorophyll special pair and subsequent electron acceptors. PSI consists of a core antenna complex that captures photons, and an electron transfer chain that converts photonic excitation into a charge separation. The eukaryotic PSI reaction center is composed of at least 11 subunits. The cofactor is P700 is a chlorophyll a/chlorophyll a' dimer, A0 is one or more chlorophyll a, A1 is one or both phylloquinones and FX is a shared 4Fe-4S iron-sulfur center..

The protein localises to the plastid. It localises to the chloroplast thylakoid membrane. The enzyme catalyses reduced [plastocyanin] + hnu + oxidized [2Fe-2S]-[ferredoxin] = oxidized [plastocyanin] + reduced [2Fe-2S]-[ferredoxin]. Functionally, psaA and PsaB bind P700, the primary electron donor of photosystem I (PSI), as well as the electron acceptors A0, A1 and FX. PSI is a plastocyanin-ferredoxin oxidoreductase, converting photonic excitation into a charge separation, which transfers an electron from the donor P700 chlorophyll pair to the spectroscopically characterized acceptors A0, A1, FX, FA and FB in turn. Oxidized P700 is reduced on the lumenal side of the thylakoid membrane by plastocyanin. The sequence is that of Photosystem I P700 chlorophyll a apoprotein A2 from Antirrhinum majus (Garden snapdragon).